A 234-amino-acid chain; its full sequence is Small ribosomal subunit protein uS3 (234 aa).

Residues 39–108 (IRKFVKKKLF…TVIVNVVEVK (70 aa)) enclose the KH type-2 domain. Residues 212-234 (KGKNEETNNETADNSRGRRREAK) are disordered.

The protein belongs to the universal ribosomal protein uS3 family. As to quaternary structure, part of the 30S ribosomal subunit. Forms a tight complex with proteins S10 and S14.

In terms of biological role, binds the lower part of the 30S subunit head. Binds mRNA in the 70S ribosome, positioning it for translation. This is Small ribosomal subunit protein uS3 from Alkaliphilus metalliredigens (strain QYMF).